The chain runs to 74 residues: DNA-directed RNA polymerase subunit omega (74 aa).

The protein belongs to the RNA polymerase subunit omega family. In terms of assembly, the RNAP catalytic core consists of 2 alpha, 1 beta, 1 beta' and 1 omega subunit. When a sigma factor is associated with the core the holoenzyme is formed, which can initiate transcription.

It catalyses the reaction RNA(n) + a ribonucleoside 5'-triphosphate = RNA(n+1) + diphosphate. Its function is as follows. Promotes RNA polymerase assembly. Latches the N- and C-terminal regions of the beta' subunit thereby facilitating its interaction with the beta and alpha subunits. The protein is DNA-directed RNA polymerase subunit omega of Helicobacter pylori (strain P12).